We begin with the raw amino-acid sequence, 692 residues long: Follicle-stimulating hormone receptor (692 aa).

The N-terminal stretch at 1-17 (MALLLVSLLAFLGSGSG) is a signal peptide. 2 disulfides stabilise this stretch: Cys18–Cys25 and Cys23–Cys32. An LRRNT domain is found at 18–46 (CHHWLCHCSNRVFLCQDSKVTEIPPDLPR). Residues 18-365 (CHHWLCHCSN…EDIMGYNILR (348 aa)) are Extracellular-facing. 9 LRR repeats span residues 49-72 (IELR…FGDL), 73-97 (EKIE…LPNL), 98-118 (HEIR…AFQN), 119-143 (LPSL…KIQS), 144-169 (LQKV…MGLS), 170-192 (FESV…AFNG), 193-216 (TQLD…VFQG), 217-240 (ASGP…GLEN), and 241-259 (LKKL…PSLD). Residues Asn191 and Asn199 are each glycosylated (N-linked (GlcNAc...) asparagine). Disulfide bonds link Cys275/Cys345, Cys276/Cys292, Cys276/Cys355, and Cys292/Cys337. An N-linked (GlcNAc...) asparagine glycan is attached at Asn293. Tyr334 is subject to Sulfotyrosine. A helical membrane pass occupies residues 366-386 (VLIWFISILAITGNTTVLVVL). Topologically, residues 387 to 397 (TTSQYKLTVPR) are cytoplasmic. The chain crosses the membrane as a helical span at residues 398 to 420 (FLMCNLAFADLCIGIYLLLIASV). The Extracellular segment spans residues 421–442 (DIHTKSQYHNYAIDWQTGAGCD). An intrachain disulfide couples Cys441 to Cys516. A helical membrane pass occupies residues 443–464 (AAGFFTVFASELSVYTLAAITL). Residues 465–484 (ERWHTITHAMQLECKVQLCH) are Cytoplasmic-facing. The helical transmembrane segment at 485 to 507 (AASIMVLGWAFAFAAALFPIFGI) threads the bilayer. The Extracellular segment spans residues 508–527 (SSYMKVSICLPMDIDSPLSQ). Residues 528–549 (LYVMALLVLNALAFVVICGCYT) form a helical membrane-spanning segment. Residues 550-572 (HIYLTVRNPNIVSSSRDTKIAKR) are Cytoplasmic-facing. The chain crosses the membrane as a helical span at residues 573–596 (MATLIFTDFLCMAPILFFAISASL). Residues 597–607 (KVPLITVSKAK) are Extracellular-facing. The chain crosses the membrane as a helical span at residues 608–629 (ILLVLFYPINSCANPFLYAIFT). The Cytoplasmic portion of the chain corresponds to 630 to 692 (KNFRRDFFVL…LVPLNHSVQN (63 aa)).

The protein belongs to the G-protein coupled receptor 1 family. FSH/LSH/TSH subfamily. Homotrimer. Functions as a homotrimer binding the FSH hormone heterodimer composed of CGA and FSHB. Interacts with ARRB2. Interacts with APPL2; interaction is independent of follicle stimulating hormone stimulation. N-glycosylated; indirectly required for FSH-binding, possibly via a conformational change that allows high affinity binding of hormone. Post-translationally, sulfated.

It localises to the cell membrane. In terms of biological role, g protein-coupled receptor for follitropin, the follicle-stimulating hormone. Through cAMP production activates the downstream PI3K-AKT and ERK1/ERK2 signaling pathways. This is Follicle-stimulating hormone receptor (Fshr) from Mus musculus (Mouse).